The following is a 144-amino-acid chain: Cell division protein SepF (144 aa).

A compositionally biased stretch (polar residues) spans 21 to 38 (TDLQGTKTTDEVSPTSRP). Residues 21–40 (TDLQGTKTTDEVSPTSRPDN) are disordered.

It belongs to the SepF family. As to quaternary structure, homodimer. Interacts with FtsZ.

The protein localises to the cytoplasm. In terms of biological role, cell division protein that is part of the divisome complex and is recruited early to the Z-ring. Probably stimulates Z-ring formation, perhaps through the cross-linking of FtsZ protofilaments. Its function overlaps with FtsA. This is Cell division protein SepF from Latilactobacillus sakei subsp. sakei (strain 23K) (Lactobacillus sakei subsp. sakei).